The following is a 176-amino-acid chain: Ribosome maturation factor RimM (176 aa).

One can recognise a PRC barrel domain in the interval 100-173 (KDEYHYHDLI…WLLINPPPGL (74 aa)).

Belongs to the RimM family. Binds ribosomal protein uS19.

The protein localises to the cytoplasm. Functionally, an accessory protein needed during the final step in the assembly of 30S ribosomal subunit, possibly for assembly of the head region. Essential for efficient processing of 16S rRNA. May be needed both before and after RbfA during the maturation of 16S rRNA. It has affinity for free ribosomal 30S subunits but not for 70S ribosomes. The chain is Ribosome maturation factor RimM from Prochlorococcus marinus (strain NATL2A).